Here is a 693-residue protein sequence, read N- to C-terminus: Elongation factor G (693 aa).

Residues 8–283 (PQQRNIGIMA…AVVEYLPSPV (276 aa)) form the tr-type G domain. Residues 17-24 (AHIDAGKT), 81-85 (DTPGH), and 135-138 (NKMD) each bind GTP.

It belongs to the TRAFAC class translation factor GTPase superfamily. Classic translation factor GTPase family. EF-G/EF-2 subfamily.

It localises to the cytoplasm. Its function is as follows. Catalyzes the GTP-dependent ribosomal translocation step during translation elongation. During this step, the ribosome changes from the pre-translocational (PRE) to the post-translocational (POST) state as the newly formed A-site-bound peptidyl-tRNA and P-site-bound deacylated tRNA move to the P and E sites, respectively. Catalyzes the coordinated movement of the two tRNA molecules, the mRNA and conformational changes in the ribosome. This is Elongation factor G from Oleidesulfovibrio alaskensis (strain ATCC BAA-1058 / DSM 17464 / G20) (Desulfovibrio alaskensis).